The primary structure comprises 140 residues: MSSVKDTMTTQVATVSPNQTIQEAASLMKQHNVGAIPVVEQGVLKGMLTDRDIALRTTAQGRDGQTPVSEVMSTELVSGNPNMSLEDASQLMAQHQIRRLPIVDQNNLVGIVALGDLAVNQMSNESAGSALTNISHQNIH.

2 CBS domains span residues 8–64 (MTTQ…GRDG) and 72–127 (MSTE…NESA).

The sequence is that of CBS domain-containing protein YhcV (yhcV) from Bacillus subtilis (strain 168).